A 1342-amino-acid polypeptide reads, in one-letter code: MSLSPHVENASIPKGSTPIPKNRNVSSIGKGEFLGSSSSNNSSFRMNHYSNSGQPSVLDSIRRPNLTPTFSYSNGVYMPESHRTSSFNDSYLPYDKNPYAKTTGSMSNKSNMKIKTKKNAINTNTRKSSGLIYTTKVDKELSSIDKVNDPNINGLVCAGKTHLGLYKFSPSDRSIKCVHDFITPNSNTSTRGTTSLLPKLSKRTRQNKFSTIADVKTGFNNYKNCIAVCNNSTAISIYDLNKSSSIDNPLITSLCEHTRSINSFDFNMVESNLIISGGQDSCVKIWDLRSNKSKSSNRSDISINTASDSIRDVKWMPGYNFASKNDQGSSTYGNLKSGYKFASIHDSGYLLKFDLRQPAQYEKKLNAHTGPGLCLNWHPNQEYIATGGRDGKCCLWFVGDNANAAENTVLNYGNSPSLHVPNTSLNNSGSLAFPKLTINTDYPVTKLKFKPAYSSNIYNSLLGISSMGDEAEVRIYSLARKYIPKHVLLSETPSLGLVWWDENLIFNIDKGTRINGWDINKEPTVLENLSKNTTTWRDLDGNGLLSVDQEIGSYEVVEPELQPTSSTTCKKHPGTIKNPKNGNPENQGIIGGIKKGFSHTGLTSFTPERPPTLKAGPTFSTKSLTLASGASSFNSSSASLTSLTPQTENREEIAIEPPCIITLDIPQIFNNIRLTKIAHSRKKNVISESSSMKNSPVEKFKYLARQLKFSYIREHNVSDSADTAYKNDIENIDVVKNATETHGDNTTTTNNNDDGDDDDDDDDDDDKIIESHLLKKYNFPENNTWATLMNEKVNNKKSKRNSSSSREFDEKDVRSSISSISASRQSHDRSRKIDKNVEAELQEKIQTLVDLISIATHNASVYLSIDDLTNFKIWILIRDSLLWDLKWMTSSQISSDNASNMDANESSDFEAGENLKTGKEFPEEDGAGTSGAESLVEERPQAFRANSDEPSDAEKKPVSKLKEQLKNTEIIPYAQPNEDSDEVLTKLKELQNQRLESRTKMGETVSDDVIIEEDEHEHQEEEQPHDSPTKSAQFHASPIAKSIPILQKREHRKSFIDTFMLHSPNGYNGDTDIGNEDDNISPRFTYNSVSPRSKVSSLQSYATTTSQLETFKKLSSHTAPIIGSPRHAPSRPDSIGREQLSSSLTKKLAKCKKIIADPPWDTKKLIKQLYNQATETGNVVLTVNILFLFQTIYQITEIDIAKDAIAHFLLLLHRYELFGIAADVLKYCPFEDIMGSEGDQSSIRLFCERCGELITNESSKEKLRAEAQQTGNKKIMDKFGYWYCDSCKKKNTSCVLCERPLKKLTMVILPCGHEGHFQCIQEWFLDENEQECPGGCPGVAFI.

Residues 1-39 (MSLSPHVENASIPKGSTPIPKNRNVSSIGKGEFLGSSSS) form a disordered region. WD repeat units follow at residues 207-248 (NKFS…SIDN), 256-296 (EHTR…SKSS), 305-342 (TASD…YKFA), 367-406 (AHTG…NAAE), 439-486 (NTDY…IPKH), and 489-527 (LSET…TVLE). 5 disordered regions span residues 559–593 (PELQ…IGGI), 600–619 (TGLT…GPTF), 630–651 (ASSF…ENRE), 736–766 (KNAT…DDDD), and 788–831 (LMNE…DRSR). The span at 630 to 644 (ASSFNSSSASLTSLT) shows a compositional bias: low complexity. Acidic residues predominate over residues 753-766 (DDGDDDDDDDDDDD). The segment covering 815 to 824 (SSISSISASR) has biased composition (low complexity). One copy of the WD 7 repeat lies at 844 to 884 (KIQTLVDLISIATHNASVYLSIDDLTNFKIWILIRDSLLWD). 2 disordered regions span residues 942-963 (AFRA…KLKE) and 1014-1047 (DEHE…PILQ). Basic and acidic residues-rich tracts occupy residues 952–963 (DAEKKPVSKLKE) and 1016–1028 (HEHQ…HDSP). Ser1037, Ser1081, Ser1088, Ser1090, Ser1124, and Ser1134 each carry phosphoserine. WD repeat units follow at residues 1130 to 1170 (SRPD…KQLY) and 1217 to 1256 (LFGI…LITN). Residues 1294-1336 (CVLCERPLKKLTMVILPCGHEGHFQCIQEWFLDENEQECPGGC) form an RING-type; degenerate zinc finger.

It belongs to the WD repeat RTC1 family.

It localises to the vacuole. Functionally, may be involved in a process influencing telomere capping. The polypeptide is Restriction of telomere capping protein 1 (RTC1) (Saccharomyces cerevisiae (strain RM11-1a) (Baker's yeast)).